A 248-amino-acid chain; its full sequence is Ribonuclease PH (248 aa).

Phosphate contacts are provided by residues Arg-86 and 124-126; that span reads GTR.

Belongs to the RNase PH family. Homohexameric ring arranged as a trimer of dimers.

It catalyses the reaction tRNA(n+1) + phosphate = tRNA(n) + a ribonucleoside 5'-diphosphate. Its function is as follows. Phosphorolytic 3'-5' exoribonuclease that plays an important role in tRNA 3'-end maturation. Removes nucleotide residues following the 3'-CCA terminus of tRNAs; can also add nucleotides to the ends of RNA molecules by using nucleoside diphosphates as substrates, but this may not be physiologically important. Probably plays a role in initiation of 16S rRNA degradation (leading to ribosome degradation) during starvation. The sequence is that of Ribonuclease PH from Clostridium perfringens (strain SM101 / Type A).